A 153-amino-acid chain; its full sequence is CRIB domain-containing protein RIC4 (153 aa).

Positions 99–112 (IGVPTNVKHVSHIG) constitute a CRIB domain.

As to quaternary structure, interacts with ARAC4/ROP2 and ARAC11/ROP1. Expressed in roots, leaves, stems, flowers, siliques and pollen.

The protein localises to the cell membrane. Its function is as follows. Functions as a downstream effector of Rho-related GTP binding proteins of the 'Rho of Plants' (ROPs) family. Participates in the propagation of ROP GTPase signals in specific cellular responses. Required for actin cortical microfilament assembly. Activated by ARAC4/ROP2 to promote the assembly of cortical actin microfilaments required for lobe formation and lateral expansion of pavement cells. Interaction with, and activation by ARAC4/ROP2 is inhibited by RIC1. Functions as a downstream effector of ARAC11/ROP1 to promote the assembly of apical F-actin associated with vesicle accumulation in the tip of the growing pollen tube. Counteracts the ARAC11/ROP1-RIC3 pathway, which activates calcium signaling that leads to apical F-actin disassembly associated with exocytosis, to control actin dynamics and pollen tube apical growth. Downstream of ARAC11/ROP1, is involved in the growth responses to the root-colonizing endophytic fungus P.indica. This Arabidopsis thaliana (Mouse-ear cress) protein is CRIB domain-containing protein RIC4 (RIC4).